Consider the following 213-residue polypeptide: ATP phosphoribosyltransferase (213 aa).

Belongs to the ATP phosphoribosyltransferase family. Short subfamily. As to quaternary structure, heteromultimer composed of HisG and HisZ subunits.

It is found in the cytoplasm. The catalysed reaction is 1-(5-phospho-beta-D-ribosyl)-ATP + diphosphate = 5-phospho-alpha-D-ribose 1-diphosphate + ATP. It participates in amino-acid biosynthesis; L-histidine biosynthesis; L-histidine from 5-phospho-alpha-D-ribose 1-diphosphate: step 1/9. Functionally, catalyzes the condensation of ATP and 5-phosphoribose 1-diphosphate to form N'-(5'-phosphoribosyl)-ATP (PR-ATP). Has a crucial role in the pathway because the rate of histidine biosynthesis seems to be controlled primarily by regulation of HisG enzymatic activity. The protein is ATP phosphoribosyltransferase of Listeria monocytogenes serotype 4b (strain F2365).